A 525-amino-acid chain; its full sequence is GMP synthase [glutamine-hydrolyzing] (525 aa).

Positions 9 to 207 (RILILDFGSQ…VLDICQCEAL (199 aa)) constitute a Glutamine amidotransferase type-1 domain. Cysteine 86 acts as the Nucleophile in catalysis. Active-site residues include histidine 181 and glutamate 183. The GMPS ATP-PPase domain maps to 208-400 (WTPATIIEDA…LGLPYDMLFR (193 aa)). Position 235 to 241 (235 to 241 (SGGVDSS)) interacts with ATP.

As to quaternary structure, homodimer.

It carries out the reaction XMP + L-glutamine + ATP + H2O = GMP + L-glutamate + AMP + diphosphate + 2 H(+). Its pathway is purine metabolism; GMP biosynthesis; GMP from XMP (L-Gln route): step 1/1. Its function is as follows. Catalyzes the synthesis of GMP from XMP. This chain is GMP synthase [glutamine-hydrolyzing], found in Serratia proteamaculans (strain 568).